The primary structure comprises 308 residues: Olfactory receptor 5H19 (308 aa).

The Extracellular portion of the chain corresponds to 1–27 (MEKNATLLTEFVLTGLSHQPLWNIPLF). An N-linked (GlcNAc...) asparagine glycan is attached at Asn4. The chain crosses the membrane as a helical span at residues 28–48 (LVFLVIYLITIVGNVSLITLI). Residues 49-55 (WTDPHLH) are Cytoplasmic-facing. The chain crosses the membrane as a helical span at residues 56–76 (IPMYLFLGSLAFVDTSISSIV). Topologically, residues 77 to 92 (VPKMLLNFFGKSKVIT) are extracellular. Residues 93-113 (LSECMAQFFLFNISATTECFL) traverse the membrane as a helical segment. An intrachain disulfide couples Cys96 to Cys188. Residues 114 to 143 (LAAMAYDRYVAICKPLLYPVVMTNGLCVWL) lie on the Cytoplasmic side of the membrane. A helical membrane pass occupies residues 144–164 (IALSFVAGIIHALIHEGFLLR). The Extracellular portion of the chain corresponds to 165 to 197 (LTFCNSNMIHNFYCDIISLLKISCTDTSLNYLI). A helical transmembrane segment spans residues 198–218 (VFIFSGSIQVFTISTILVSYT). The Cytoplasmic segment spans residues 219–238 (IILFTILKKKSAKGIKKAFS). A helical membrane pass occupies residues 239–259 (TCGAHLLSVSLYYGPLLFMYV). Residues 260 to 270 (HPASSEVDDQD) are Extracellular-facing. A helical membrane pass occupies residues 271–291 (MIDSLFYTVIIPVLNPIIYSL). The Cytoplasmic segment spans residues 292–308 (RNKQVIDSLAKFLKRNV).

It belongs to the G-protein coupled receptor 1 family.

Its subcellular location is the cell membrane. Functionally, potential odorant receptor. This is Olfactory receptor 5H19 from Mus musculus (Mouse).